Reading from the N-terminus, the 452-residue chain is Pup--protein ligase (452 aa).

Glutamate 9 is a binding site for Mg(2+). Residue arginine 53 coordinates ATP. Mg(2+) is bound at residue tyrosine 55. Aspartate 57 acts as the Proton acceptor in catalysis. A Mg(2+)-binding site is contributed by glutamate 63. ATP-binding residues include threonine 66 and tryptophan 419.

The protein belongs to the Pup ligase/Pup deamidase family. Pup-conjugating enzyme subfamily.

It catalyses the reaction ATP + [prokaryotic ubiquitin-like protein]-L-glutamate + [protein]-L-lysine = ADP + phosphate + N(6)-([prokaryotic ubiquitin-like protein]-gamma-L-glutamyl)-[protein]-L-lysine.. Its pathway is protein degradation; proteasomal Pup-dependent pathway. It participates in protein modification; protein pupylation. Functionally, catalyzes the covalent attachment of the prokaryotic ubiquitin-like protein modifier Pup to the proteasomal substrate proteins, thereby targeting them for proteasomal degradation. This tagging system is termed pupylation. The ligation reaction involves the side-chain carboxylate of the C-terminal glutamate of Pup and the side-chain amino group of a substrate lysine. The chain is Pup--protein ligase from Gordonia bronchialis (strain ATCC 25592 / DSM 43247 / BCRC 13721 / JCM 3198 / KCTC 3076 / NBRC 16047 / NCTC 10667) (Rhodococcus bronchialis).